The primary structure comprises 73 residues: Putative membrane protein insertion efficiency factor (73 aa).

Belongs to the UPF0161 family.

It is found in the cell inner membrane. Functionally, could be involved in insertion of integral membrane proteins into the membrane. This chain is Putative membrane protein insertion efficiency factor, found in Phocaeicola vulgatus (strain ATCC 8482 / DSM 1447 / JCM 5826 / CCUG 4940 / NBRC 14291 / NCTC 11154) (Bacteroides vulgatus).